The following is a 101-amino-acid chain: Small ribosomal subunit protein uS14 (101 aa).

Belongs to the universal ribosomal protein uS14 family. In terms of assembly, part of the 30S ribosomal subunit. Contacts proteins S3 and S10.

Functionally, binds 16S rRNA, required for the assembly of 30S particles and may also be responsible for determining the conformation of the 16S rRNA at the A site. The protein is Small ribosomal subunit protein uS14 of Hahella chejuensis (strain KCTC 2396).